The chain runs to 102 residues: NADH-quinone oxidoreductase subunit K 1 (102 aa).

The next 3 membrane-spanning stretches (helical) occupy residues Leu5 to Leu25, Ile31 to Phe51, and Leu65 to Phe85.

This sequence belongs to the complex I subunit 4L family. NDH-1 is composed of 14 different subunits. Subunits NuoA, H, J, K, L, M, N constitute the membrane sector of the complex.

Its subcellular location is the cell inner membrane. It catalyses the reaction a quinone + NADH + 5 H(+)(in) = a quinol + NAD(+) + 4 H(+)(out). NDH-1 shuttles electrons from NADH, via FMN and iron-sulfur (Fe-S) centers, to quinones in the respiratory chain. The immediate electron acceptor for the enzyme in this species is believed to be ubiquinone. Couples the redox reaction to proton translocation (for every two electrons transferred, four hydrogen ions are translocated across the cytoplasmic membrane), and thus conserves the redox energy in a proton gradient. The chain is NADH-quinone oxidoreductase subunit K 1 from Rhizobium etli (strain ATCC 51251 / DSM 11541 / JCM 21823 / NBRC 15573 / CFN 42).